A 162-amino-acid polypeptide reads, in one-letter code: 2-C-methyl-D-erythritol 2,4-cyclodiphosphate synthase (162 aa).

A divalent metal cation-binding residues include Asp8 and His10. Residues 8–10 (DVH) and 36–37 (HS) contribute to the 4-CDP-2-C-methyl-D-erythritol 2-phosphate site. His44 lines the a divalent metal cation pocket. 4-CDP-2-C-methyl-D-erythritol 2-phosphate contacts are provided by residues 58 to 60 (DIG), 63 to 67 (FPDTD), 102 to 108 (AQAPKMA), 134 to 137 (TTTE), Phe141, and Arg144.

The protein belongs to the IspF family. Homotrimer. It depends on a divalent metal cation as a cofactor.

It carries out the reaction 4-CDP-2-C-methyl-D-erythritol 2-phosphate = 2-C-methyl-D-erythritol 2,4-cyclic diphosphate + CMP. It participates in isoprenoid biosynthesis; isopentenyl diphosphate biosynthesis via DXP pathway; isopentenyl diphosphate from 1-deoxy-D-xylulose 5-phosphate: step 4/6. In terms of biological role, involved in the biosynthesis of isopentenyl diphosphate (IPP) and dimethylallyl diphosphate (DMAPP), two major building blocks of isoprenoid compounds. Catalyzes the conversion of 4-diphosphocytidyl-2-C-methyl-D-erythritol 2-phosphate (CDP-ME2P) to 2-C-methyl-D-erythritol 2,4-cyclodiphosphate (ME-CPP) with a corresponding release of cytidine 5-monophosphate (CMP). The polypeptide is 2-C-methyl-D-erythritol 2,4-cyclodiphosphate synthase (Yersinia pseudotuberculosis serotype IB (strain PB1/+)).